A 493-amino-acid chain; its full sequence is Probable NADPH:adrenodoxin oxidoreductase, mitochondrial (493 aa).

4 residues coordinate FAD: Ser-26, Glu-48, Leu-56, and Ile-100. NADP(+)-binding positions include 177-180, 223-224, and Glu-235; these read NGNV and RR. Residues Trp-407 and 414–416 contribute to the FAD site; that span reads GVI. Gly-414 serves as a coordination point for NADP(+).

The protein belongs to the ferredoxin--NADP reductase type 1 family. The cofactor is FAD.

Its subcellular location is the mitochondrion inner membrane. It catalyses the reaction 2 reduced [adrenodoxin] + NADP(+) + H(+) = 2 oxidized [adrenodoxin] + NADPH. In terms of biological role, adrenodoxin reductase transfers electrons from NADPH to adrenodoxin, which is involved in heme A biosynthesis and in iron-sulfur cluster assembly. Involved in the electron transfer to heme A synthase COX15, a heme protein that catalyzes the conversion of heme O to heme A. Required for the de novo synthesis of Fe-S clusters on iron sulfur cluster assembly protein ISU1. Involved in electron delivery for Fe-S cluster synthesis. Essential for coenzyme Q biosynthesis. May be involved in the electron transfer required for the hydroxylation reaction performed by COQ6. May play a role in cellular and mitochondrial iron homeostasis. The sequence is that of Probable NADPH:adrenodoxin oxidoreductase, mitochondrial from Saccharomyces cerevisiae (strain ATCC 204508 / S288c) (Baker's yeast).